A 77-amino-acid chain; its full sequence is Large ribosomal subunit protein bL31 (77 aa).

Residues cysteine 16, cysteine 18, cysteine 37, and cysteine 40 each contribute to the Zn(2+) site.

Belongs to the bacterial ribosomal protein bL31 family. Type A subfamily. In terms of assembly, part of the 50S ribosomal subunit. Requires Zn(2+) as cofactor.

In terms of biological role, binds the 23S rRNA. In Pseudomonas fluorescens (strain SBW25), this protein is Large ribosomal subunit protein bL31.